Here is a 419-residue protein sequence, read N- to C-terminus: 26S proteasome regulatory subunit 8 homolog A (419 aa).

A2 carries the N-acetylalanine modification. Position 202 to 209 (202 to 209) interacts with ATP; it reads GPPGTGKT. Residue K406 forms a Glycyl lysine isopeptide (Lys-Gly) (interchain with G-Cter in ubiquitin) linkage.

The protein belongs to the AAA ATPase family. In terms of assembly, component of the 19S regulatory particle (RP/PA700) base subcomplex of the 26S proteasome. The 26S proteasome is composed of a core protease (CP), known as the 20S proteasome, capped at one or both ends by the 19S regulatory particle (RP/PA700). The RP/PA700 complex is composed of at least 17 different subunits in two subcomplexes, the base and the lid, which form the portions proximal and distal to the 20S proteolytic core, respectively.

It is found in the cytoplasm. The protein localises to the nucleus. The 26S proteasome is involved in the ATP-dependent degradation of ubiquitinated proteins. The regulatory (or ATPase) complex confers ATP dependency and substrate specificity to the 26S complex. This chain is 26S proteasome regulatory subunit 8 homolog A (RPT6A), found in Arabidopsis thaliana (Mouse-ear cress).